The following is a 196-amino-acid chain: Putative 3-methyladenine DNA glycosylase (196 aa).

This sequence belongs to the DNA glycosylase MPG family.

The polypeptide is Putative 3-methyladenine DNA glycosylase (Bacillus velezensis (strain DSM 23117 / BGSC 10A6 / LMG 26770 / FZB42) (Bacillus amyloliquefaciens subsp. plantarum)).